Here is a 208-residue protein sequence, read N- to C-terminus: A-type ATP synthase subunit E (208 aa).

A disordered region spans residues 37-57; that stretch reads DAEKTAEAEKNKILDNGKKQS.

Belongs to the V-ATPase E subunit family. In terms of assembly, has multiple subunits with at least A(3), B(3), C, D, E, F, H, I and proteolipid K(x).

Its subcellular location is the cell membrane. Its function is as follows. Component of the A-type ATP synthase that produces ATP from ADP in the presence of a proton gradient across the membrane. This chain is A-type ATP synthase subunit E, found in Methanobrevibacter smithii (strain ATCC 35061 / DSM 861 / OCM 144 / PS).